A 55-amino-acid polypeptide reads, in one-letter code: Lantibiotic nisin-U (55 aa).

Positions 1–24 (MNNEDFNLDLIKISKENNSGASPR) are excised as a propeptide. The residue at position 26 (Thr-26) is a 2,3-didehydrobutyrine. Positions 27–31 (SKSLC) form a cross-link, lanthionine (Ser-Cys). Position 29 is a 2,3-didehydroalanine (Ser) (Ser-29). 4 cross-links (beta-methyllanthionine (Thr-Cys)) span residues 32–35 (TPGC), 37–43 (TGILMTC), 47–50 (TATC), and 49–52 (TCGC). The residue at position 42 (Thr-42) is a 2,3-didehydrobutyrine.

In terms of processing, maturation of lantibiotics involves the enzymatic conversion of Thr, and Ser into dehydrated AA and the formation of thioether bonds with cysteine. This is followed by membrane translocation and cleavage of the modified precursor.

The protein resides in the secreted. Functionally, lanthionine-containing peptide antibiotic (lantibiotic) active on Gram-positive bacteria. The bactericidal activity of lantibiotics is based on depolarization of energized bacterial cytoplasmic membranes, initiated by the formation of aqueous transmembrane pores. The chain is Lantibiotic nisin-U (nsuA) from Streptococcus uberis.